The primary structure comprises 294 residues: 4-hydroxy-tetrahydrodipicolinate synthase (294 aa).

Pyruvate is bound at residue threonine 47. Tyrosine 135 functions as the Proton donor/acceptor in the catalytic mechanism. The active-site Schiff-base intermediate with substrate is lysine 163. A pyruvate-binding site is contributed by threonine 205.

This sequence belongs to the DapA family. As to quaternary structure, homotetramer; dimer of dimers.

It is found in the cytoplasm. It catalyses the reaction L-aspartate 4-semialdehyde + pyruvate = (2S,4S)-4-hydroxy-2,3,4,5-tetrahydrodipicolinate + H2O + H(+). It functions in the pathway amino-acid biosynthesis; L-lysine biosynthesis via DAP pathway; (S)-tetrahydrodipicolinate from L-aspartate: step 3/4. Functionally, catalyzes the condensation of (S)-aspartate-beta-semialdehyde [(S)-ASA] and pyruvate to 4-hydroxy-tetrahydrodipicolinate (HTPA). The protein is 4-hydroxy-tetrahydrodipicolinate synthase of Rickettsia conorii (strain ATCC VR-613 / Malish 7).